Here is a 317-residue protein sequence, read N- to C-terminus: HTH-type transcriptional regulator CfxR (317 aa).

In terms of domain architecture, HTH lysR-type spans 8–65 (LTLRQLQIFVTVARHASFVRAAEELHLTQPAVSMQVKQLESVVGMALFERVKGQLTLT). The H-T-H motif DNA-binding region spans 25 to 44 (FVRAAEELHLTQPAVSMQVK).

The protein belongs to the LysR transcriptional regulatory family.

Functionally, trans-acting transcriptional regulator of RuBisCO genes (cfxLS) expression. The polypeptide is HTH-type transcriptional regulator CfxR (cfxR) (Cupriavidus necator (strain ATCC 17699 / DSM 428 / KCTC 22496 / NCIMB 10442 / H16 / Stanier 337) (Ralstonia eutropha)).